The sequence spans 428 residues: 3-phosphoshikimate 1-carboxyvinyltransferase (428 aa).

3 residues coordinate 3-phosphoshikimate: Lys-23, Ser-24, and Arg-28. Residue Lys-23 participates in phosphoenolpyruvate binding. Phosphoenolpyruvate contacts are provided by Gly-97 and Arg-125. 7 residues coordinate 3-phosphoshikimate: Ser-170, Ser-171, Gln-172, Ser-198, Asp-314, Asn-337, and Lys-341. Gln-172 serves as a coordination point for phosphoenolpyruvate. Asp-314 functions as the Proton acceptor in the catalytic mechanism. Positions 345, 387, and 412 each coordinate phosphoenolpyruvate.

It belongs to the EPSP synthase family. Monomer.

Its subcellular location is the cytoplasm. It carries out the reaction 3-phosphoshikimate + phosphoenolpyruvate = 5-O-(1-carboxyvinyl)-3-phosphoshikimate + phosphate. Its pathway is metabolic intermediate biosynthesis; chorismate biosynthesis; chorismate from D-erythrose 4-phosphate and phosphoenolpyruvate: step 6/7. In terms of biological role, catalyzes the transfer of the enolpyruvyl moiety of phosphoenolpyruvate (PEP) to the 5-hydroxyl of shikimate-3-phosphate (S3P) to produce enolpyruvyl shikimate-3-phosphate and inorganic phosphate. The chain is 3-phosphoshikimate 1-carboxyvinyltransferase from Yersinia pestis bv. Antiqua (strain Antiqua).